The primary structure comprises 391 residues: Glutamate 5-kinase (391 aa).

Lys-17 lines the ATP pocket. Positions 57, 144, and 156 each coordinate substrate. ATP-binding positions include 176-177 (SD) and 216-222 (TGGMTTK). One can recognise a PUA domain in the interval 278-356 (QGQIVIDDGA…AWLAAEMGPA (79 aa)). The disordered stretch occupies residues 370–391 (SRRRKAEPSSRNQKSSGSRVTS). The segment covering 378-391 (SSRNQKSSGSRVTS) has biased composition (polar residues).

The protein belongs to the glutamate 5-kinase family.

Its subcellular location is the cytoplasm. It carries out the reaction L-glutamate + ATP = L-glutamyl 5-phosphate + ADP. The protein operates within amino-acid biosynthesis; L-proline biosynthesis; L-glutamate 5-semialdehyde from L-glutamate: step 1/2. In terms of biological role, catalyzes the transfer of a phosphate group to glutamate to form L-glutamate 5-phosphate. The protein is Glutamate 5-kinase of Cutibacterium acnes (strain DSM 16379 / KPA171202) (Propionibacterium acnes).